A 910-amino-acid chain; its full sequence is NADH-quinone oxidoreductase subunit G (910 aa).

The 83-residue stretch at 1–83 folds into the 2Fe-2S ferredoxin-type domain; it reads MAKIYVDGKA…GTIISINDDT (83 aa). [2Fe-2S] cluster contacts are provided by cysteine 34, cysteine 45, cysteine 48, and cysteine 67. One can recognise a 4Fe-4S His(Cys)3-ligated-type domain in the interval 83 to 122; it reads TSKKFRSNIVELLLTNHPHDCPVCEEGGNCHLQDMTVMTT. [4Fe-4S] cluster contacts are provided by histidine 99, cysteine 103, cysteine 106, cysteine 112, cysteine 151, cysteine 154, cysteine 157, cysteine 201, cysteine 228, cysteine 231, cysteine 235, and cysteine 263. One can recognise a 4Fe-4S Mo/W bis-MGD-type domain in the interval 221 to 277; sequence MQYAPGICQNCSIGCNISIGERYGEIRRIENRYHESINHYLICDLGRFGYSHTNLKN.

Belongs to the complex I 75 kDa subunit family. In terms of assembly, composed of 13 different subunits. Subunits NuoCD, E, F, and G constitute the peripheral sector of the complex. [2Fe-2S] cluster is required as a cofactor. It depends on [4Fe-4S] cluster as a cofactor.

The enzyme catalyses a quinone + NADH + 5 H(+)(in) = a quinol + NAD(+) + 4 H(+)(out). In terms of biological role, NDH-1 shuttles electrons from NADH, via FMN and iron-sulfur (Fe-S) centers, to quinones in the respiratory chain. Couples the redox reaction to proton translocation (for every two electrons transferred, four hydrogen ions are translocated across the cytoplasmic membrane), and thus conserves the redox energy in a proton gradient. This Buchnera aphidicola subsp. Schizaphis graminum (strain Sg) protein is NADH-quinone oxidoreductase subunit G (nuoG).